Consider the following 545-residue polypeptide: MVVSLSFPEADPALSSPGAQQLHQDEAQVVVELTANDKPSLSWECPQGPGCGLQNTGNSCYLNAALQCLTHTPPLADYMLSQEYSQTCCSPEGCKMCAMEAHVTQSLLHSHSGDVMKPSQILTSAFHKHQQEDAHEFLMFTLETMHESCLQVHRQSEPTSEDSSPIHDIFGGLWRSQIKCLHCQGTSDTYDRFLDVPLDISSAQSVNQALWDTEKSEELRGENAYYCGRCRQKMPASKTLHIHSAPKVLLLVLKRFSAFMGNKLDRKVSYPEFLDLKPYLSQPTGGPLPYALYAVLVHEGATCHSGHYFSYVKARHGAWYKMDDTKVTSCDVTSVLNENAYVLFYVQQTDLKQVSIDMPEGRVHEVLDPEYQLKKSRRKKHKKKSPCTEDAGEPCKNREKRATKETSLGEGKVLQEKNHKKAGQKHENTKLVPQEQNHQKLGQKHRINEILPQEQNHQKAGQSLRNTEGELDLPADAIVIHLLRSTENWGRDAPDKENQPWHNADRLLTSQDPVNTGQLCRQEGRRRSKKGKNKNKQGQRLLLVC.

The 298-residue stretch at 51 to 348 (CGLQNTGNSC…NAYVLFYVQQ (298 aa)) folds into the USP domain. Cys60 (nucleophile) is an active-site residue. The active-site Proton acceptor is His307. 2 disordered regions span residues 368 to 442 (DPEY…QKLG) and 489 to 539 (WGRD…KQGQ). A compositionally biased stretch (basic residues) spans 374-385 (KKSRRKKHKKKS). Composition is skewed to basic and acidic residues over residues 393-404 (EPCKNREKRATK) and 489-505 (WGRDAPDKENQPWHNAD). Positions 508–519 (LTSQDPVNTGQL) are enriched in polar residues. Residues 524–537 (GRRRSKKGKNKNKQ) are compositionally biased toward basic residues.

It belongs to the peptidase C19 family. USP17 subfamily. As to expression, expressed in T cells.

Its subcellular location is the nucleus. It is found in the endoplasmic reticulum. The catalysed reaction is Thiol-dependent hydrolysis of ester, thioester, amide, peptide and isopeptide bonds formed by the C-terminal Gly of ubiquitin (a 76-residue protein attached to proteins as an intracellular targeting signal).. Functionally, deubiquitinating enzyme that removes conjugated ubiquitin from specific proteins to regulate different cellular processes. Important for preimplantation stage embryonic development. This is Ubiquitin carboxyl-terminal hydrolase 17-like protein C from Mus musculus (Mouse).